We begin with the raw amino-acid sequence, 183 residues long: uncharacterized protein (183 aa).

A disordered region spans residues 136–183; that stretch reads EPPASVPSKQSGRSDKKKSTRKSPTFRNRPDFRKNKGRQLNKTTKQKK. Residues 170–183 are compositionally biased toward basic residues; sequence NKGRQLNKTTKQKK.

This is an uncharacterized protein from Homo sapiens (Human).